A 187-amino-acid chain; its full sequence is Elongation factor P (187 aa).

The protein belongs to the elongation factor P family.

The protein resides in the cytoplasm. Its pathway is protein biosynthesis; polypeptide chain elongation. Involved in peptide bond synthesis. Stimulates efficient translation and peptide-bond synthesis on native or reconstituted 70S ribosomes in vitro. Probably functions indirectly by altering the affinity of the ribosome for aminoacyl-tRNA, thus increasing their reactivity as acceptors for peptidyl transferase. In Rhodococcus erythropolis (strain PR4 / NBRC 100887), this protein is Elongation factor P.